We begin with the raw amino-acid sequence, 88 residues long: Platelet factor 4 (88 aa).

Residue T7 is glycosylated (O-linked (GalNAc...) threonine). 2 cysteine pairs are disulfide-bonded: C25-C51 and C27-C67. S41 is modified (phosphoserine). 76–82 serves as a coordination point for heparin; the sequence is KKILKKL.

It belongs to the intercrine alpha (chemokine CxC) family. As to quaternary structure, homotetramer. Interacts with TNFAIP6 (via Link domain). Interacts with CCR1. Interacts with CXCR3. Interacts with THBD; this interaction enhances generation of activated protein C. O-linked glycan consists of Gal-GalNAc disaccharide which is modified with sialic acid residues (microheterogeneity).

It localises to the secreted. Chemokine released during platelet aggregation that plays a role in different biological processes including hematopoiesis, cell proliferation, differentiation, and activation. Acts via different functional receptors including CCR1, CXCR3A or CXCR3B. Upon interaction with CXCR3A receptor, induces activated T-lymphocytes migration mediated via downstream Ras/extracellular signal-regulated kinase (ERK) signaling. Neutralizes the anticoagulant effect of heparin by binding more strongly to heparin than to the chondroitin-4-sulfate chains of the carrier molecule. Plays a role in the inhibition of hematopoiesis and in the maintenance of hematopoietic stem cell (HSC) quiescence. Chemotactic for neutrophils and monocytes via CCR1. Inhibits endothelial cell proliferation. In cooperation with toll-like receptor 8/TLR8, induces chromatin remodeling and activates inflammatory gene expression via the TBK1-IRF5 axis. In addition, induces myofibroblast differentiation and collagen synthesis in different precursor cells, including endothelial cells, by stimulating endothelial-to-mesenchymal transition. Interacts with thrombomodulin/THBD to enhance the activation of protein C and thus potentiates its anticoagulant activity. This Bos taurus (Bovine) protein is Platelet factor 4 (PF4).